The chain runs to 263 residues: Large ribosomal subunit protein uL23m (263 aa).

Residues 1–45 (MPRLTVGTKNMLYPLQKTLAVGSCKPEQVPIRSLASVVESSSKIL) constitute a mitochondrion transit peptide.

This sequence belongs to the universal ribosomal protein uL23 family. As to quaternary structure, component of the mitochondrial large ribosomal subunit (mt-LSU). Mature yeast 74S mitochondrial ribosomes consist of a small (37S) and a large (54S) subunit. The 37S small subunit contains a 15S ribosomal RNA (15S mt-rRNA) and 34 different proteins. The 54S large subunit contains a 21S rRNA (21S mt-rRNA) and 46 different proteins. uL23m forms the wall of the exit tunnel. Interacts with the C-terminus of OXA1.

It localises to the mitochondrion. Its function is as follows. Component of the mitochondrial ribosome (mitoribosome), a dedicated translation machinery responsible for the synthesis of mitochondrial genome-encoded proteins, including at least some of the essential transmembrane subunits of the mitochondrial respiratory chain. The mitoribosomes are attached to the mitochondrial inner membrane and translation products are cotranslationally integrated into the membrane. This Saccharomyces cerevisiae (strain ATCC 204508 / S288c) (Baker's yeast) protein is Large ribosomal subunit protein uL23m (MRP20).